A 239-amino-acid polypeptide reads, in one-letter code: LexA repressor (239 aa).

Residues Phe-26 to Thr-46 constitute a DNA-binding region (H-T-H motif). Catalysis depends on for autocatalytic cleavage activity residues Ser-159 and Lys-197.

It belongs to the peptidase S24 family. In terms of assembly, homodimer.

It catalyses the reaction Hydrolysis of Ala-|-Gly bond in repressor LexA.. Its function is as follows. Represses a number of genes involved in the response to DNA damage (SOS response), including recA and lexA. In the presence of single-stranded DNA, RecA interacts with LexA causing an autocatalytic cleavage which disrupts the DNA-binding part of LexA, leading to derepression of the SOS regulon and eventually DNA repair. The protein is LexA repressor of Allorhizobium ampelinum (strain ATCC BAA-846 / DSM 112012 / S4) (Agrobacterium vitis (strain S4)).